The chain runs to 461 residues: Proton extrusion protein PxcA (461 aa).

The next 4 helical transmembrane spans lie at 244–264 (FMLL…ALIV), 339–359 (LKNI…VFTG), 386–406 (IILF…EVLV), and 421–441 (FINM…KYWI).

The protein belongs to the CemA family.

The protein localises to the cell inner membrane. In terms of biological role, required for H(+) efflux immediately after light irradiation to form a rapid H(+) concentration gradient across the thylakoid membranes. Together with PxcL, contributes to transient H(+) uptake following dark to light transition. In Thermosynechococcus vestitus (strain NIES-2133 / IAM M-273 / BP-1), this protein is Proton extrusion protein PxcA.